We begin with the raw amino-acid sequence, 80 residues long: RNA-binding protein Hfq (80 aa).

Residues 9–69 (DVFLNQVRKE…VSTISPNSPV (61 aa)) enclose the Sm domain.

This sequence belongs to the Hfq family. Homohexamer.

Functionally, RNA chaperone that binds small regulatory RNA (sRNAs) and mRNAs to facilitate mRNA translational regulation in response to envelope stress, environmental stress and changes in metabolite concentrations. Also binds with high specificity to tRNAs. In Alkaliphilus oremlandii (strain OhILAs) (Clostridium oremlandii (strain OhILAs)), this protein is RNA-binding protein Hfq.